Here is a 369-residue protein sequence, read N- to C-terminus: Putative agmatine deiminase 2 (369 aa).

The active-site Amidino-cysteine intermediate is the Cys356.

It belongs to the agmatine deiminase family.

The enzyme catalyses agmatine + H2O = N-carbamoylputrescine + NH4(+). This chain is Putative agmatine deiminase 2, found in Listeria monocytogenes serovar 1/2a (strain ATCC BAA-679 / EGD-e).